The sequence spans 447 residues: N-succinylarginine dihydrolase (447 aa).

Substrate-binding positions include 19–28, N110, and 137–138; these read AGLSFGNEAS and HR. E174 is a catalytic residue. Residue R212 participates in substrate binding. Residue H248 is part of the active site. The substrate site is built by D250 and N359. Residue C365 is the Nucleophile of the active site.

Belongs to the succinylarginine dihydrolase family. In terms of assembly, homodimer.

It carries out the reaction N(2)-succinyl-L-arginine + 2 H2O + 2 H(+) = N(2)-succinyl-L-ornithine + 2 NH4(+) + CO2. It participates in amino-acid degradation; L-arginine degradation via AST pathway; L-glutamate and succinate from L-arginine: step 2/5. Catalyzes the hydrolysis of N(2)-succinylarginine into N(2)-succinylornithine, ammonia and CO(2). The chain is N-succinylarginine dihydrolase from Salmonella paratyphi B (strain ATCC BAA-1250 / SPB7).